A 239-amino-acid polypeptide reads, in one-letter code: 2,3,4,5-tetrahydropyridine-2,6-dicarboxylate N-acetyltransferase (239 aa).

The protein belongs to the transferase hexapeptide repeat family. DapH subfamily.

The catalysed reaction is (S)-2,3,4,5-tetrahydrodipicolinate + acetyl-CoA + H2O = L-2-acetamido-6-oxoheptanedioate + CoA. The protein operates within amino-acid biosynthesis; L-lysine biosynthesis via DAP pathway; LL-2,6-diaminopimelate from (S)-tetrahydrodipicolinate (acetylase route): step 1/3. Functionally, catalyzes the transfer of an acetyl group from acetyl-CoA to tetrahydrodipicolinate. The chain is 2,3,4,5-tetrahydropyridine-2,6-dicarboxylate N-acetyltransferase from Staphylococcus haemolyticus (strain JCSC1435).